The sequence spans 228 residues: 2,3-bisphosphoglycerate-dependent phosphoglycerate mutase (228 aa).

Residues 8 to 15 (RHGQSVWN), 21 to 22 (TG), Arg-60, 87 to 90 (ERHY), Lys-98, 114 to 115 (RR), and 183 to 184 (GN) each bind substrate. His-9 acts as the Tele-phosphohistidine intermediate in catalysis. Glu-87 acts as the Proton donor/acceptor in catalysis.

This sequence belongs to the phosphoglycerate mutase family. BPG-dependent PGAM subfamily.

The enzyme catalyses (2R)-2-phosphoglycerate = (2R)-3-phosphoglycerate. It functions in the pathway carbohydrate degradation; glycolysis; pyruvate from D-glyceraldehyde 3-phosphate: step 3/5. Catalyzes the interconversion of 2-phosphoglycerate and 3-phosphoglycerate. In Staphylococcus carnosus (strain TM300), this protein is 2,3-bisphosphoglycerate-dependent phosphoglycerate mutase.